A 355-amino-acid polypeptide reads, in one-letter code: Guanine nucleotide-binding protein alpha-12 subunit (355 aa).

A G-alpha domain is found at 28–355 (RQINLLLLGS…EQNLKTLMMQ (328 aa)). Residues 31-44 (NLLLLGSGESGKST) are G1 motif. Residues 36–43 (GSGESGKS), 176–182 (LFCRKAT), 201–205 (DVGGQ), 270–273 (NKND), and A327 contribute to the GTP site. Positions 43 and 182 each coordinate Mg(2+). Positions 174 to 182 (DILFCRKAT) are G2 motif. Residues 197–206 (FRFIDVGGQR) are G3 motif. The segment at 266–273 (ILFMNKND) is G4 motif. The interval 325–330 (TTAVDT) is G5 motif.

The protein belongs to the G-alpha family. G proteins are composed of 3 units; alpha, beta and gamma. The alpha chain contains the guanine nucleotide binding site.

Guanine nucleotide-binding proteins (G proteins) are involved as modulators or transducers in various transmembrane signaling systems. May play a role in resistance to fungal infection in the epidermis by regulating the up-regulation of several antimicrobial peptides of the NLP and CNC families. Upstream of plc-3, tpa-1 and the p38-like pathway, required for the expression of antimicrobial peptide nlp-29 in the epidermis in response to fungal infection or physical injury. The polypeptide is Guanine nucleotide-binding protein alpha-12 subunit (gpa-12) (Caenorhabditis elegans).